Here is a 532-residue protein sequence, read N- to C-terminus: uncharacterized protein (532 aa).

6 helical membrane-spanning segments follow: residues 7 to 26, 30 to 52, 59 to 77, 87 to 109, 116 to 134, and 139 to 161; these read HSSY…LGRI, GLSL…GVII, FGLV…PGFF, LIII…KYAF, VVGL…AVAI, and SPLA…ILFV. 2 consecutive RCK C-terminal domains span residues 179-262 and 263-346; these read LEIE…LVGE and REEG…LLGN. Helical transmembrane passes span 356 to 378, 388 to 410, 446 to 468, and 509 to 531; these read FFPI…SFPG, GGVL…LWSM, GLLL…AFVG, and YATV…ATVV.

Belongs to the AAE transporter (TC 2.A.81) family.

Its subcellular location is the cell membrane. This is an uncharacterized protein from Bacteroides fragilis (strain YCH46).